Consider the following 106-residue polypeptide: uncharacterized protein (106 aa).

A helical membrane pass occupies residues 9–27 (ALAALAFTLGLIGLAAWAL). The tract at residues 84–106 (TPKGPPPASALSPSPVAEPEPVV) is disordered.

This sequence belongs to the FliO/MopB family.

Its subcellular location is the cell membrane. The protein resides in the bacterial flagellum basal body. This is an uncharacterized protein from Caulobacter vibrioides (strain ATCC 19089 / CIP 103742 / CB 15) (Caulobacter crescentus).